Reading from the N-terminus, the 735-residue chain is Wall-associated receptor kinase 1 (735 aa).

An N-terminal signal peptide occupies residues 1 to 24; sequence MKVQEGLFLVAIFFSLACTQLVKG. The Extracellular segment spans residues 25–331; the sequence is QHQPGENCQN…TTTMSCKRKE (307 aa). Residues asparagine 38, asparagine 56, asparagine 80, asparagine 90, asparagine 113, asparagine 140, asparagine 209, asparagine 235, and asparagine 250 are each glycosylated (N-linked (GlcNAc...) asparagine). The tract at residues 67 to 254 is polygalacturonic acid-binding; that stretch reads RPHVLSDIEV…SICGGNSTCL (188 aa). The region spanning 234-281 is the EGF-like 1 domain; the sequence is GNQTCEQVGSTSICGGNSTCLDSTPRNGYICRCNEGFDGNPYLSAGCQ. Cystine bridges form between cysteine 238–cysteine 253, cysteine 247–cysteine 264, cysteine 266–cysteine 280, cysteine 286–cysteine 303, cysteine 297–cysteine 312, and cysteine 314–cysteine 327. The region spanning 282–328 is the EGF-like 2; calcium-binding domain; it reads DVNECTTSSTIHRHNCSDPKTCRNKVGGFYCKCQSGYRLDTTTMSCK. An N-linked (GlcNAc...) asparagine glycan is attached at asparagine 296. Residues 332-352 form a helical membrane-spanning segment; that stretch reads FAWTTILLVTTIGFLVILLGV. The Cytoplasmic portion of the chain corresponds to 353–735; that stretch reads ACIQQRMKHL…VAILDIETGR (383 aa). Threonine 398 bears the Phosphothreonine mark. The region spanning 409–692 is the Protein kinase domain; that stretch reads YAESRILGQG…RVEKTKHKWS (284 aa). ATP is bound by residues 415-423 and lysine 437; that span reads LGQGGQGTV. Tyrosine 482 carries the post-translational modification Phosphotyrosine. Aspartate 534 functions as the Proton acceptor in the catalytic mechanism. Phosphothreonine occurs at positions 568 and 573. Tyrosine 581 carries the post-translational modification Phosphotyrosine.

This sequence belongs to the protein kinase superfamily. Ser/Thr protein kinase family. In terms of assembly, interacts with the glycine-rich proteins GRP3 and GRP3S, and the type 2C protein phosphatase KAPP. Component of a 500 kDa complex, composed of WAK1, GRP3 and KAPP. Interacts with the oxygen-evolving enhancer protein 2 (OEE2). As to expression, predominantly expressed in green tissues such as stems and leaves. Detected at organ junctions.

Its subcellular location is the membrane. The catalysed reaction is L-seryl-[protein] + ATP = O-phospho-L-seryl-[protein] + ADP + H(+). It carries out the reaction L-threonyl-[protein] + ATP = O-phospho-L-threonyl-[protein] + ADP + H(+). In terms of biological role, serine/threonine-protein kinase that may function as a signaling receptor of extracellular matrix component. Binding to pectin may have significance in the control of cell expansion, morphogenesis and development. Required during plant's response to pathogen infection and in plant defense against heavy metal toxicity. Phosphorylates the oxygen-evolving enhancer protein 2 (OEE2) in an GRP-3-dependent manner. This is Wall-associated receptor kinase 1 (WAK1) from Arabidopsis thaliana (Mouse-ear cress).